An 811-amino-acid polypeptide reads, in one-letter code: Transmembrane protease serine 6 (811 aa).

Residues 1-55 (MLLLFHSKRMPVAEAPQVAGGQGDGGDGEEAEPEGMFKACEDSKRKARGYLRLVP) are Cytoplasmic-facing. The chain crosses the membrane as a helical; Signal-anchor for type II membrane protein span at residues 56–76 (LFVLLALLVLASAGVLLWYFL). Residues 77–811 (GYKAEVMVSQ…VISWIQQVVT (735 aa)) are Extracellular-facing. The SEA domain maps to 84-209 (VSQVYSGSLR…EGLVILEASV (126 aa)). 6 N-linked (GlcNAc...) asparagine glycosylation sites follow: asparagine 136, asparagine 184, asparagine 216, asparagine 338, asparagine 433, and asparagine 453. CUB domains follow at residues 213-336 (AALN…QACE) and 335-452 (CEVN…YGLY). A disulfide bridge connects residues cysteine 335 and cysteine 366. LDL-receptor class A domains are found at residues 457–489 (PCPGEFLCSVNGLCVPACDGVKDCPNGLDERNC), 490–526 (VCRATFQCKEDSTCISLPKVCDGQPDCLNGSDEEQCQ), and 530–567 (PCGTFTFQCEDRSCVKKPNPQCDGRPDCRDGSDEEHCD). 10 disulfide bridges follow: cysteine 458/cysteine 470, cysteine 464/cysteine 480, cysteine 474/cysteine 489, cysteine 491/cysteine 503, cysteine 497/cysteine 516, cysteine 510/cysteine 525, cysteine 531/cysteine 543, cysteine 538/cysteine 557, cysteine 551/cysteine 566, and cysteine 602/cysteine 618. Residue asparagine 518 is glycosylated (N-linked (GlcNAc...) asparagine). In terms of domain architecture, Peptidase S1 spans 577–811 (IVGGAVSSEG…VISWIQQVVT (235 aa)). Catalysis depends on charge relay system residues histidine 617 and aspartate 668. Cystine bridges form between cysteine 702/cysteine 768, cysteine 733/cysteine 747, and cysteine 758/cysteine 787. Residue serine 762 is the Charge relay system of the active site.

The protein belongs to the peptidase S1 family. Interacts with HJV. Post-translationally, the single-chain zymogen undergoes autoproteolytic processing. This results in TMPRSS6 shedding from the cell surface and conversion into an activated two-chains form which is released extracellularly. The process involves a trans-activation mechanism that requires TMPRSS6 oligomerization.

Its subcellular location is the cell membrane. Functionally, membrane-bound serine protease. Through the cleavage of cell surface hemojuvelin (HJV), a regulator of the expression of the iron absorption-regulating hormone hepicidin/HAMP, plays a role in iron homeostasis. This Homo sapiens (Human) protein is Transmembrane protease serine 6 (TMPRSS6).